The following is a 196-amino-acid chain: Holliday junction branch migration complex subunit RuvA (196 aa).

The interval 1–63 is domain I; it reads MYEYFKGIIS…EDAELLYGFA (63 aa). The domain II stretch occupies residues 64-142; that stretch reads TEEEKQLFLS…AADGLAESKA (79 aa). Positions 143–146 are flexible linker; sequence PVQT. The segment at 147–196 is domain III; the sequence is VDNQELEEAMEAMLALGYKATELKKIKKFFEGTTDTAENYIKSALKMLVK.

This sequence belongs to the RuvA family. In terms of assembly, homotetramer. Forms an RuvA(8)-RuvB(12)-Holliday junction (HJ) complex. HJ DNA is sandwiched between 2 RuvA tetramers; dsDNA enters through RuvA and exits via RuvB. An RuvB hexamer assembles on each DNA strand where it exits the tetramer. Each RuvB hexamer is contacted by two RuvA subunits (via domain III) on 2 adjacent RuvB subunits; this complex drives branch migration. In the full resolvosome a probable DNA-RuvA(4)-RuvB(12)-RuvC(2) complex forms which resolves the HJ.

The protein resides in the cytoplasm. In terms of biological role, the RuvA-RuvB-RuvC complex processes Holliday junction (HJ) DNA during genetic recombination and DNA repair, while the RuvA-RuvB complex plays an important role in the rescue of blocked DNA replication forks via replication fork reversal (RFR). RuvA specifically binds to HJ cruciform DNA, conferring on it an open structure. The RuvB hexamer acts as an ATP-dependent pump, pulling dsDNA into and through the RuvAB complex. HJ branch migration allows RuvC to scan DNA until it finds its consensus sequence, where it cleaves and resolves the cruciform DNA. This Streptococcus gordonii (strain Challis / ATCC 35105 / BCRC 15272 / CH1 / DL1 / V288) protein is Holliday junction branch migration complex subunit RuvA.